We begin with the raw amino-acid sequence, 319 residues long: Taste receptor type 2 member 30 (319 aa).

Position 1 (Met-1) is a topological domain, extracellular. A helical transmembrane segment spans residues 2–22 (ITFLPIIFSILIVVIFVVGNF). Residues 23-46 (ANGFIALVNSIEWVKRQKISFVDQ) are Cytoplasmic-facing. The helical transmembrane segment at 47 to 67 (ILTALAVSRVGLLWVLLLHWY) threads the bilayer. Residues 68–86 (ATQLNPAFYSVEVRITVYN) lie on the Extracellular side of the membrane. The helical transmembrane segment at 87–107 (VWAVTNHFSSWLATSLSMFYL) threads the bilayer. Over 108–126 (LKIANFSNLIFLRIKRRVK) the chain is Cytoplasmic. The chain crosses the membrane as a helical span at residues 127 to 147 (SVVLVILLGPLLFLVCHLFVI). Over 148 to 178 (NMDETIWTKEYEGNMTWKIKLKSAMYHSNMT) the chain is Extracellular. N-linked (GlcNAc...) asparagine glycans are attached at residues Asn-161 and Asn-176. Residues 179–199 (LTILANFVPLTLTLISFLLLI) form a helical membrane-spanning segment. At 200 to 229 (CSLCKHLKKMQLHGKGSQDPSTKVHIKALQ) the chain is on the cytoplasmic side. A helical membrane pass occupies residues 230–250 (TVTSFLLLCAIYFLSMIISVC). The Extracellular segment spans residues 251–259 (NLGRLQKQP). The chain crosses the membrane as a helical span at residues 260–280 (VFMFCQAIIFSYPSTHPFILI). The Cytoplasmic segment spans residues 281-319 (LGNKKLKQIFLSVLWHVRYWVKDRSLRLHRFTRAALCKG).

This sequence belongs to the G-protein coupled receptor T2R family.

The protein resides in the membrane. Functionally, receptor that may play a role in the perception of bitterness and is gustducin-linked. May play a role in sensing the chemical composition of the gastrointestinal content. The activity of this receptor may stimulate alpha gustducin, mediate PLC-beta-2 activation and lead to the gating of TRPM5. The sequence is that of Taste receptor type 2 member 30 (TAS2R30) from Pan paniscus (Pygmy chimpanzee).